A 537-amino-acid chain; its full sequence is Tegument protein BRRF2 (537 aa).

2 disordered regions span residues 322-466 and 486-537; these read PRFL…AEEF and GLRV…LSVV. Positions 334–347 are enriched in polar residues; sequence EPQQTCSQLTSRGN. Positions 420-441 are enriched in low complexity; sequence VTGSSQAAPSSSSVTPVASLSG. Over residues 492–517 the composition is skewed to acidic residues; the sequence is DEDEDGSEDGEFSDLDLSDSDHEGDE.

The protein belongs to the lymphocryptovirus BRRF2 family.

It localises to the virion tegument. The sequence is that of Tegument protein BRRF2 from Homo sapiens (Human).